We begin with the raw amino-acid sequence, 271 residues long: MLIHPEINPVALQLGPLAIHWYGLTYLAAFGLFFFLASLRLRHEPYASITGPGAWSRRDIEDILFLGVMGVVIGGRLGYCLFYKPGYYLTHPLEIFAVWQGGMSFHGGMLGVLVSQWWFARSRQRPWLQVMDFIAPCVPTGLAAGRVGNFINGELWGRFSAPDLPWGMVFAHSGSMLPRHPSQVYQFLMEGLLLFVLLWLYARKPRKMGQVSGAFLVGYGVFRFIAEFFREPDDFLGILALGMSMGQWLCVPMIAAGIWLWIWASNRTSRR.

The next 3 membrane-spanning stretches (helical) occupy residues 17 to 37 (LAIH…FFLA), 63 to 83 (ILFL…CLFY), and 95 to 115 (IFAV…VLVS). Arginine 146 contributes to the a 1,2-diacyl-sn-glycero-3-phospho-(1'-sn-glycerol) binding site. 3 consecutive transmembrane segments (helical) span residues 182–202 (SQVY…WLYA), 209–229 (GQVS…AEFF), and 243–263 (MSMG…LWIW).

This sequence belongs to the Lgt family.

It is found in the cell inner membrane. The enzyme catalyses L-cysteinyl-[prolipoprotein] + a 1,2-diacyl-sn-glycero-3-phospho-(1'-sn-glycerol) = an S-1,2-diacyl-sn-glyceryl-L-cysteinyl-[prolipoprotein] + sn-glycerol 1-phosphate + H(+). It functions in the pathway protein modification; lipoprotein biosynthesis (diacylglyceryl transfer). In terms of biological role, catalyzes the transfer of the diacylglyceryl group from phosphatidylglycerol to the sulfhydryl group of the N-terminal cysteine of a prolipoprotein, the first step in the formation of mature lipoproteins. This is Phosphatidylglycerol--prolipoprotein diacylglyceryl transferase from Polaromonas naphthalenivorans (strain CJ2).